A 156-amino-acid polypeptide reads, in one-letter code: Arginine repressor (156 aa).

Belongs to the ArgR family.

The protein localises to the cytoplasm. It participates in amino-acid biosynthesis; L-arginine biosynthesis [regulation]. Its function is as follows. Regulates arginine biosynthesis genes. In Sodalis glossinidius (strain morsitans), this protein is Arginine repressor.